Reading from the N-terminus, the 255-residue chain is 5'-nucleotidase SurE (255 aa).

D8, D9, S39, and N95 together coordinate a divalent metal cation.

The protein belongs to the SurE nucleotidase family. A divalent metal cation serves as cofactor.

The protein localises to the cytoplasm. It catalyses the reaction a ribonucleoside 5'-phosphate + H2O = a ribonucleoside + phosphate. Functionally, nucleotidase that shows phosphatase activity on nucleoside 5'-monophosphates. This chain is 5'-nucleotidase SurE, found in Herpetosiphon aurantiacus (strain ATCC 23779 / DSM 785 / 114-95).